Reading from the N-terminus, the 391-residue chain is Phosphoglycerate kinase (391 aa).

Substrate-binding positions include 21–23 (DFN), arginine 41, 64–67 (HLGR), arginine 121, and arginine 154. ATP is bound by residues lysine 205, glutamate 322, and 348 to 351 (GGDS).

It belongs to the phosphoglycerate kinase family. As to quaternary structure, monomer.

The protein localises to the cytoplasm. The enzyme catalyses (2R)-3-phosphoglycerate + ATP = (2R)-3-phospho-glyceroyl phosphate + ADP. Its pathway is carbohydrate degradation; glycolysis; pyruvate from D-glyceraldehyde 3-phosphate: step 2/5. The polypeptide is Phosphoglycerate kinase (Solibacter usitatus (strain Ellin6076)).